Reading from the N-terminus, the 354-residue chain is Protein PHLOEM PROTEIN 2-LIKE A8 (354 aa).

Residues 12-179 (TGPQVFINFR…EMILEIQKAL (168 aa)) form the TIR domain. E86 is an active-site residue.

It carries out the reaction NAD(+) + H2O = ADP-D-ribose + nicotinamide + H(+). The polypeptide is Protein PHLOEM PROTEIN 2-LIKE A8 (PP2A8) (Arabidopsis thaliana (Mouse-ear cress)).